Here is a 603-residue protein sequence, read N- to C-terminus: NADH-ubiquinone oxidoreductase chain 5 (603 aa).

The next 16 helical transmembrane spans lie at 4–24 (YTTM…TTLI), 38–58 (SIIA…MCLD), 87–107 (MTFI…SLWY), 122–142 (LIFL…QLFI), 144–160 (WEGV…WWYA), 171–191 (AILY…WFLL), 211–233 (TPLL…HPWL), 241–261 (TPVS…FLLI), 272–292 (LIQT…AICA), 301–320 (IVAF…IGIN), 325–347 (AFLH…GSII), 370–390 (STSL…TGFY), 407–429 (WALS…MILL), 457–477 (LTIG…PMST), 482–502 (IPLY…LTAL), and 583–603 (MIKL…LLIM).

The protein belongs to the complex I subunit 5 family. In terms of assembly, core subunit of respiratory chain NADH dehydrogenase (Complex I) which is composed of 45 different subunits.

The protein resides in the mitochondrion inner membrane. It carries out the reaction a ubiquinone + NADH + 5 H(+)(in) = a ubiquinol + NAD(+) + 4 H(+)(out). Core subunit of the mitochondrial membrane respiratory chain NADH dehydrogenase (Complex I) which catalyzes electron transfer from NADH through the respiratory chain, using ubiquinone as an electron acceptor. Essential for the catalytic activity and assembly of complex I. The chain is NADH-ubiquinone oxidoreductase chain 5 (MT-ND5) from Pan paniscus (Pygmy chimpanzee).